Reading from the N-terminus, the 394-residue chain is Elongation factor Tu (394 aa).

A tr-type G domain is found at 10-204 (KPHLNVGTIG…ALDTYIPLPE (195 aa)). The interval 19-26 (GHVDHGKT) is G1. Residue 19 to 26 (GHVDHGKT) participates in GTP binding. A Mg(2+)-binding site is contributed by Thr26. The G2 stretch occupies residues 60–64 (GITIN). Residues 81 to 84 (DCPG) are G3. GTP-binding positions include 81–85 (DCPGH) and 136–139 (NKCD). The tract at residues 136 to 139 (NKCD) is G4. The interval 174 to 176 (SAL) is G5.

This sequence belongs to the TRAFAC class translation factor GTPase superfamily. Classic translation factor GTPase family. EF-Tu/EF-1A subfamily. As to quaternary structure, monomer.

Its subcellular location is the cytoplasm. It catalyses the reaction GTP + H2O = GDP + phosphate + H(+). GTP hydrolase that promotes the GTP-dependent binding of aminoacyl-tRNA to the A-site of ribosomes during protein biosynthesis. The chain is Elongation factor Tu from Psychromonas ingrahamii (strain DSM 17664 / CCUG 51855 / 37).